Consider the following 141-residue polypeptide: Hemoglobin subunit alpha-1 (141 aa).

The Globin domain occupies valine 1–arginine 141. Histidine 58 is a binding site for O2. Residue histidine 87 coordinates heme b.

Belongs to the globin family. Heterotetramer of two alpha chains and two beta chains. Red blood cells.

Functionally, involved in oxygen transport from the lung to the various peripheral tissues. This is Hemoglobin subunit alpha-1 from Varecia variegata (Black-and-white ruffed lemur).